The sequence spans 249 residues: Enolase-phosphatase E1 (249 aa).

The Mg(2+) site is built by D14 and E16. Residues 141–142 (SS) and K175 each bind substrate. D200 is a Mg(2+) binding site.

The protein belongs to the HAD-like hydrolase superfamily. MasA/MtnC family. Monomer. Mg(2+) is required as a cofactor.

The protein localises to the cytoplasm. It localises to the nucleus. It carries out the reaction 5-methylsulfanyl-2,3-dioxopentyl phosphate + H2O = 1,2-dihydroxy-5-(methylsulfanyl)pent-1-en-3-one + phosphate. Its pathway is amino-acid biosynthesis; L-methionine biosynthesis via salvage pathway; L-methionine from S-methyl-5-thio-alpha-D-ribose 1-phosphate: step 3/6. The protein operates within amino-acid biosynthesis; L-methionine biosynthesis via salvage pathway; L-methionine from S-methyl-5-thio-alpha-D-ribose 1-phosphate: step 4/6. Functionally, bifunctional enzyme that catalyzes the enolization of 2,3-diketo-5-methylthiopentyl-1-phosphate (DK-MTP-1-P) into the intermediate 2-hydroxy-3-keto-5-methylthiopentenyl-1-phosphate (HK-MTPenyl-1-P), which is then dephosphorylated to form the acireductone 1,2-dihydroxy-3-keto-5-methylthiopentene (DHK-MTPene). In Drosophila virilis (Fruit fly), this protein is Enolase-phosphatase E1.